Reading from the N-terminus, the 124-residue chain is Histone H2A (124 aa).

The span at M1–S18 shows a compositional bias: basic residues. The segment at M1 to A21 is disordered. S2 carries the post-translational modification N-acetylserine. The residue at position 2 (S2) is a Phosphoserine. K36 carries the post-translational modification N6-succinyllysine. Q104 is subject to N5-methylglutamine. Residue K119 forms a Glycyl lysine isopeptide (Lys-Gly) (interchain with G-Cter in ubiquitin) linkage. T120 is modified (phosphothreonine).

The protein belongs to the histone H2A family. As to quaternary structure, the nucleosome is a histone octamer containing two molecules each of H2A, H2B, H3 and H4 assembled in one H3-H4 heterotetramer and two H2A-H2B heterodimers. The octamer wraps approximately 147 bp of DNA. Post-translationally, the chromatin-associated form, but not the free cytoplasmic form, is phosphorylated on Thr-120 by NHK-1 during mitosis, and dephosphorylated during S-phase. Also phosphorylated on Thr-120 by NHK-1 during prophase I of meiosis; which is required for acetylation of H3 'Lys-14' and H4 'Lys-5', diassembly of the synaptonemal complex, and karyosome formation. In terms of processing, monoubiquitination of Lys-119 by sce/dRING gives a specific tag for epigenetic transcriptional repression. Phosphorylation on Ser-2 is enhanced during mitosis. Phosphorylation on Ser-2 directly represses transcription.

It localises to the nucleus. The protein localises to the chromosome. Functionally, core component of nucleosome. Nucleosomes wrap and compact DNA into chromatin, limiting DNA accessibility to the cellular machineries which require DNA as a template. Histones thereby play a central role in transcription regulation, DNA repair, DNA replication and chromosomal stability. DNA accessibility is regulated via a complex set of post-translational modifications of histones, also called histone code, and nucleosome remodeling. This chain is Histone H2A (His2A), found in Drosophila erecta (Fruit fly).